Reading from the N-terminus, the 327-residue chain is Malate dehydrogenase (327 aa).

11 to 17 is a binding site for NAD(+); that stretch reads GAAGQIG. 2 residues coordinate substrate: R92 and R98. NAD(+) contacts are provided by residues N105, Q112, and 129-131; that span reads VGN. Substrate is bound by residues N131 and R162. H187 (proton acceptor) is an active-site residue.

It belongs to the LDH/MDH superfamily. MDH type 2 family.

It carries out the reaction (S)-malate + NAD(+) = oxaloacetate + NADH + H(+). Functionally, catalyzes the reversible oxidation of malate to oxaloacetate. The protein is Malate dehydrogenase of Leptospira biflexa serovar Patoc (strain Patoc 1 / Ames).